Here is a 62-residue protein sequence, read N- to C-terminus: Keratin-associated protein 6-2 (62 aa).

Belongs to the KRTAP type 6 family. Interacts with hair keratins.

Its function is as follows. In the hair cortex, hair keratin intermediate filaments are embedded in an interfilamentous matrix, consisting of hair keratin-associated proteins (KRTAP), which are essential for the formation of a rigid and resistant hair shaft through their extensive disulfide bond cross-linking with abundant cysteine residues of hair keratins. The matrix proteins include the high-sulfur and high-glycine-tyrosine keratins. This chain is Keratin-associated protein 6-2 (KRTAP6-2), found in Homo sapiens (Human).